A 123-amino-acid chain; its full sequence is MARVKRSVNAKKKRREVLDQASGYRGQRSRLYRKAKEQTLHSATYSFRDRRAKKGDFRSLWIQRINAASRAQGMTYNRFINGLKNAGVEVDRKMLAELAVSDINAFNSLVEVAKANQPQNAAA.

The segment covering 1-15 has biased composition (basic residues); it reads MARVKRSVNAKKKRR. Positions 1–23 are disordered; that stretch reads MARVKRSVNAKKKRREVLDQASG.

The protein belongs to the bacterial ribosomal protein bL20 family.

Its function is as follows. Binds directly to 23S ribosomal RNA and is necessary for the in vitro assembly process of the 50S ribosomal subunit. It is not involved in the protein synthesizing functions of that subunit. This Cutibacterium acnes (strain DSM 16379 / KPA171202) (Propionibacterium acnes) protein is Large ribosomal subunit protein bL20.